The following is a 216-amino-acid chain: Adenylate kinase (216 aa).

Residue 10 to 15 (GSGKGT) participates in ATP binding. The segment at 30-59 (STGEILRKEIKKNKKTKKYIKKTINKGKLI) is NMP. Residues Thr31, Arg36, 57 to 59 (KLI), 85 to 88 (GFPR), and Gln92 each bind AMP. The LID stretch occupies residues 121-158 (GRLIHASSGRTYHKIFNPPKIKNKDDITQEKLCSRNDD). Residues Arg122 and 131–132 (TY) each bind ATP. AMP-binding residues include Arg155 and Arg166. Gln196 contributes to the ATP binding site.

It belongs to the adenylate kinase family. As to quaternary structure, monomer.

It localises to the cytoplasm. The enzyme catalyses AMP + ATP = 2 ADP. It functions in the pathway purine metabolism; AMP biosynthesis via salvage pathway; AMP from ADP: step 1/1. Functionally, catalyzes the reversible transfer of the terminal phosphate group between ATP and AMP. Plays an important role in cellular energy homeostasis and in adenine nucleotide metabolism. This chain is Adenylate kinase, found in Buchnera aphidicola subsp. Cinara cedri (strain Cc).